Here is a 503-residue protein sequence, read N- to C-terminus: ATP synthase subunit alpha (503 aa).

170–177 (GDRQTGKT) contacts ATP.

In terms of assembly, F-type ATPases have 2 components, CF(1) - the catalytic core - and CF(0) - the membrane proton channel. CF(1) has five subunits: alpha(3), beta(3), gamma(1), delta(1), epsilon(1). CF(0) has four main subunits: a(1), b(1), b'(1) and c(9-12).

It localises to the cellular thylakoid membrane. It carries out the reaction ATP + H2O + 4 H(+)(in) = ADP + phosphate + 5 H(+)(out). With respect to regulation, inhibited by dicyclohexylcarbodiimide. Functionally, produces ATP from ADP in the presence of a proton gradient across the membrane. The alpha chain is a regulatory subunit. Its function is as follows. The complex from the organism is particularly stable to disruption and remains functional after 6 hrs at 55 degrees Celsius. The sequence is that of ATP synthase subunit alpha from Thermosynechococcus vestitus (strain NIES-2133 / IAM M-273 / BP-1).